Consider the following 77-residue polypeptide: Apelin (77 aa).

The N-terminal stretch at 1 to 22 (MNVKILTLVIVLVVSLLCSASA) is a signal peptide. A disordered region spans residues 21 to 77 (SAGPMASTEHSKEIEEVGSMRTPLRQNPARAGRSQRPAGWRRRRPRPRLSHKGPMPF). The segment covering 59–71 (GWRRRRPRPRLSH) has biased composition (basic residues).

Belongs to the apelin family.

The protein localises to the secreted. The protein resides in the extracellular space. Functionally, peptide hormone that functions as endogenous ligand for the G-protein-coupled apelin receptor (aplnra and/or aplnrb), that plays a role in cadiovascular homeostasis. Functions as a balanced agonist activating both G(i) protein pathway and beta-arrestin pathway of APLNR. Downstream G proteins activation, apelin can inhibit cAMP production and activate key intracellular effectors such as ERKs. On the other hand, APLNR activation induces beta-arrestin recruitment to the membrane leading to desensitization and internalization of the receptor. Apelin blunts cardiac hypertrophic induction from APLNR on response to pathological stimuli, but also induces myocardial hypertrophy under normal conditions. Involved in the regulation of cardiac precursor cell movements during gastrulation and heart morphogenesis. Plays a role in early coronary blood vessels formation. Mediates myocardial contractility in an ERK1/2-dependent manner. May also have a role in the central control of body fluid homeostasis. The sequence is that of Apelin from Danio rerio (Zebrafish).